The sequence spans 489 residues: WPP domain-interacting protein 1 (489 aa).

The disordered stretch occupies residues 49-73; that stretch reads SNSVELGKPMSFDSPGDGGGAYSPV. 3 short sequence motifs (nuclear localization signal) span residues 80–81, 83–84, and 104–105; these read RK, RR, and KR. The interval 195–264 is disordered; it reads PMISSGQGGN…DDAGGEGGES (70 aa). Positions 215-224 are enriched in basic and acidic residues; that stretch reads GESVDFEKEN. Residues 323–446 are a coiled coil; that stretch reads EIVTLVNNVE…QDLQNDCIEI (124 aa). One can recognise a KASH domain in the interval 459–489; it reads SYVLIQLVLLSTVVLLLLSQLLPEPDTVVPT. The helical transmembrane segment at 460–480 threads the bilayer; the sequence is YVLIQLVLLSTVVLLLLSQLL.

As to quaternary structure, homodimer and heterodimer with WIP2. Component of Ran complexes at least composed of WIT1 or WIT2, RANGAP1 or RANGAP2, and WIP1 or WIP2 or WIP3. Interacts with RANGAP1, RANGAP2, WPP1/MAF1, and WPP2/MAF2. Interacts with SUN1 and SUN2. Interacts with KIN1. Core component of the LINC complex which is composed of inner nuclear membrane SUN domain-containing proteins coupled to outer nuclear membrane WIP and WIT proteins. The LINC complex also involves nucleoskeletal proteins CRWN/LINC and possibly KAKU4 and the cytoskeletal myosin KAKU1. Interacts with WIT1 and SUN2. Interacts with WIT2. Interacts with SUN3. In terms of tissue distribution, expressed in seedlings, roots, stems, leaves, and flowers.

Its subcellular location is the nucleus envelope. It is found in the nucleus membrane. Mediates and enhances the nuclear envelope docking of RANGAP proteins mediated by WIT1 and WIT2 in the undifferentiated cells of root tips. As component of the SUN-WIP-WIT2-KAKU1 complex, mediates the transfer of cytoplasmic forces to the nuclear envelope (NE), leading to nuclear shape changes. The sequence is that of WPP domain-interacting protein 1 (WIP1) from Arabidopsis thaliana (Mouse-ear cress).